Here is a 212-residue protein sequence, read N- to C-terminus: Peroxisomal membrane protein 4 (212 aa).

The next 2 membrane-spanning stretches (helical) occupy residues 97 to 117 and 153 to 173; these read GETH…LLFG and WDPF…LFEY. Asn-206 carries N-linked (GlcNAc...) asparagine glycosylation.

This sequence belongs to the peroxisomal membrane protein PXMP2/4 family. As to quaternary structure, interacts with PEX19.

It is found in the peroxisome membrane. The chain is Peroxisomal membrane protein 4 (Pxmp4) from Mus musculus (Mouse).